A 101-amino-acid chain; its full sequence is MNLSLREIQKLLVTVAADVARRRLARGLKLNYSEAVALITDHVVEGARDGKLVADLMQSAREVLRVDQVMEGVDTMVGIIQVEVTFPDGTKLVSVHSPIYK.

It belongs to the urease gamma subunit family. Heterotrimer of UreA (gamma), UreB (beta) and UreC (alpha) subunits. Three heterotrimers associate to form the active enzyme.

Its subcellular location is the cytoplasm. It carries out the reaction urea + 2 H2O + H(+) = hydrogencarbonate + 2 NH4(+). The protein operates within nitrogen metabolism; urea degradation; CO(2) and NH(3) from urea (urease route): step 1/1. The chain is Urease subunit gamma from Ureaplasma urealyticum (Ureaplasma urealyticum biotype 2).